A 189-amino-acid chain; its full sequence is Potassium-transporting ATPase KdpC subunit (189 aa).

Residues 6 to 26 (PAILMLIIFTILCGGIYPAVV) traverse the membrane as a helical segment.

Belongs to the KdpC family. The system is composed of three essential subunits: KdpA, KdpB and KdpC.

The protein localises to the cell inner membrane. In terms of biological role, part of the high-affinity ATP-driven potassium transport (or Kdp) system, which catalyzes the hydrolysis of ATP coupled with the electrogenic transport of potassium into the cytoplasm. This subunit acts as a catalytic chaperone that increases the ATP-binding affinity of the ATP-hydrolyzing subunit KdpB by the formation of a transient KdpB/KdpC/ATP ternary complex. The sequence is that of Potassium-transporting ATPase KdpC subunit from Geobacter sulfurreducens (strain ATCC 51573 / DSM 12127 / PCA).